Consider the following 241-residue polypeptide: MLVLFVATWSDLGLCKKRPKPGGWNTGGSRYPGQGSPGGNRYPPQGGGSWGQPHGGGWGQPHGGGWGQPHGGGWGQPHGGGWGQGGGTHNQWNKPSKPKTNMKHVAGAAAAGAVVGGLGGYMLGSAMSRPLIHFGNDYEDRYYRENMYRYPNQVYYRPVDQYSNQNNFVHDCVNITIKQHTVTTTTKGENFTETDVKMMERVVEQMCITQYEKESQAYYQRGSSMVLFSSPPVILLISFLI.

Residues M1–C15 form the signal peptide. The interval K16 to Y31 is interaction with ADGRG6. The interaction with GRB2, ERI3 and SYN1 stretch occupies residues K16–S223. The tract at residues R18–T100 is disordered. A run of 5 repeats spans residues P44–Q52, P53–Q60, P61–Q68, P69–Q76, and P77–Q84. Residues P44 to Q84 form a 5 X 8 AA tandem repeats of P-H-G-G-G-W-G-Q region. The span at Q45–T88 shows a compositional bias: gly residues. The Cu(2+) site is built by H54, G55, G56, H62, G63, G64, H70, G71, G72, H78, G79, and G80. Cysteines 172 and 207 form a disulfide. N-linked (GlcNAc...) asparagine glycans are attached at residues N174 and N190. The GPI-anchor amidated serine moiety is linked to residue S223. Positions S224–I241 are cleaved as a propeptide — removed in mature form.

It belongs to the prion family. As to quaternary structure, monomer and homodimer. Has a tendency to aggregate into amyloid fibrils containing a cross-beta spine, formed by a steric zipper of superposed beta-strands. Soluble oligomers may represent an intermediate stage on the path to fibril formation. Copper binding may promote oligomerization. Interacts with GRB2, APP, ERI3/PRNPIP and SYN1. Mislocalized cytosolically exposed PrP interacts with MGRN1; this interaction alters MGRN1 subcellular location and causes lysosomal enlargement. Interacts with APP. Interacts with KIAA1191. Interacts with ADGRG6.

It is found in the cell membrane. The protein resides in the golgi apparatus. Functionally, its primary physiological function is unclear. May play a role in neuronal development and synaptic plasticity. May be required for neuronal myelin sheath maintenance. May promote myelin homeostasis through acting as an agonist for ADGRG6 receptor. May play a role in iron uptake and iron homeostasis. Soluble oligomers are toxic to cultured neuroblastoma cells and induce apoptosis (in vitro). Association with GPC1 (via its heparan sulfate chains) targets PRNP to lipid rafts. Also provides Cu(2+) or Zn(2+) for the ascorbate-mediated GPC1 deaminase degradation of its heparan sulfate side chains. This Plecturocebus moloch (Dusky titi monkey) protein is Major prion protein (PRNP).